A 409-amino-acid chain; its full sequence is Putative actin-fragmin kinase DDB_G0268812 (409 aa).

Positions 1–45 (MKTFRDFKKKIKNNNNNKNNKNNNINNNNSNNNKNNKNNNNNNSN) are disordered. Residues 5-46 (RDFKKKIKNNNNNKNNKNNNINNNNSNNNKNNKNNNNNNSNN) are a coiled coil. Over residues 13–45 (NNNNNKNNKNNNINNNNSNNNKNNKNNNNNNSN) the composition is skewed to low complexity.

The protein belongs to the protein kinase superfamily. AFK Ser/Thr protein kinase family.

In Dictyostelium discoideum (Social amoeba), this protein is Putative actin-fragmin kinase DDB_G0268812.